The chain runs to 206 residues: Cytochrome c oxidase assembly protein CtaG (206 aa).

Over 1-22 the chain is Cytoplasmic; that stretch reads MTEQPTNRNDVPRRGLGRDATV. Residues 23–43 form a helical; Signal-anchor for type II membrane protein membrane-spanning segment; it reads ASICGLVVALMVGASYAAVPF. Residues 44–206 lie on the Periplasmic side of the membrane; it reads YNWFCRATGF…GEPDSRKGAL (163 aa).

Belongs to the COX11/CtaG family.

It localises to the cell inner membrane. Exerts its effect at some terminal stage of cytochrome c oxidase synthesis, probably by being involved in the insertion of the copper B into subunit I. The sequence is that of Cytochrome c oxidase assembly protein CtaG from Rhodopseudomonas palustris (strain BisB18).